The chain runs to 190 residues: ATP synthase subunit b (190 aa).

The helical transmembrane segment at 24–44 threads the bilayer; it reads IVGSLICFVVILFFFWKLVLP.

This sequence belongs to the ATPase B chain family. F-type ATPases have 2 components, F(1) - the catalytic core - and F(0) - the membrane proton channel. F(1) has five subunits: alpha(3), beta(3), gamma(1), delta(1), epsilon(1). F(0) has three main subunits: a(1), b(2) and c(10-14). The alpha and beta chains form an alternating ring which encloses part of the gamma chain. F(1) is attached to F(0) by a central stalk formed by the gamma and epsilon chains, while a peripheral stalk is formed by the delta and b chains.

It localises to the cell membrane. Functionally, f(1)F(0) ATP synthase produces ATP from ADP in the presence of a proton or sodium gradient. F-type ATPases consist of two structural domains, F(1) containing the extramembraneous catalytic core and F(0) containing the membrane proton channel, linked together by a central stalk and a peripheral stalk. During catalysis, ATP synthesis in the catalytic domain of F(1) is coupled via a rotary mechanism of the central stalk subunits to proton translocation. In terms of biological role, component of the F(0) channel, it forms part of the peripheral stalk, linking F(1) to F(0). The protein is ATP synthase subunit b of Leifsonia xyli subsp. xyli (strain CTCB07).